Here is a 318-residue protein sequence, read N- to C-terminus: Coproporphyrin III ferrochelatase (318 aa).

Residues histidine 186 and glutamate 268 each coordinate Fe(2+).

It belongs to the ferrochelatase family.

It is found in the cytoplasm. The catalysed reaction is Fe-coproporphyrin III + 2 H(+) = coproporphyrin III + Fe(2+). It participates in porphyrin-containing compound metabolism; protoheme biosynthesis. Its function is as follows. Involved in coproporphyrin-dependent heme b biosynthesis. Catalyzes the insertion of ferrous iron into coproporphyrin III to form Fe-coproporphyrin III. The polypeptide is Coproporphyrin III ferrochelatase (Lactococcus lactis subsp. cremoris (strain MG1363)).